Consider the following 533-residue polypeptide: Tyrosine protein-kinase src-1 (533 aa).

Glycine 2 is lipidated: N-myristoyl glycine. The 62-residue stretch at 71–132 (QERETLVALY…PRNFVAKQQT (62 aa)) folds into the SH3 domain. Residues 138-237 (WYAGKIPRNR…GLCCQLTFPA (100 aa)) enclose the SH2 domain. The 260-residue stretch at 262 to 521 (LHLKRKLGDG…TLYHFFDDYF (260 aa)) folds into the Protein kinase domain. ATP-binding positions include 268-276 (LGDGNFGEV) and lysine 290. Aspartate 381 serves as the catalytic Proton acceptor. Tyrosine 416 carries the phosphotyrosine; by autocatalysis modification. Tyrosine 528 bears the Phosphotyrosine mark.

This sequence belongs to the protein kinase superfamily. Tyr protein kinase family. SRC subfamily. As to quaternary structure, interacts (via SH2 domain and SH3 domain) with unc-5 (via cytoplasmic domain); the interaction requires kinase activity. Interacts (when activated and phosphorylated at 'Tyr-416') with ina-1 (via cytoplasmic domain) and with ced-2 (via SH2 domain). Requires Mg(2+) as cofactor. It depends on Mn(2+) as a cofactor. In terms of processing, may be phosphorylated on Tyr-528 by csk-1. As to expression, expressed in some neurons (ASE, ADF, AVA, AUA, RMDV and BAG) in the head region, anchor cell, vulva, cells around anus, body wall muscle, pharyngeal muscles in procorpus and metacorpus. Expressed in gonadal distal tip cells.

It is found in the cell membrane. The protein localises to the cell projection. The protein resides in the phagocytic cup. The catalysed reaction is L-tyrosyl-[protein] + ATP = O-phospho-L-tyrosyl-[protein] + ADP + H(+). Its activity is regulated as follows. May be activated by autophosphorylation. May be inhibited by csk-1-mediated phosphorylation. Non-receptor tyrosine-protein kinase which plays a role in endoderm development by controlling spindle orientation in EMS blastomere, probably downstream of receptor mes-1. Also involved in embryonic body morphogenesis, especially in the formation of the pharynx and the intestine. May be dispensable for pharyngeal muscle organization in the adult. Probably phosphorylates netrin receptor unc-5, to regulate distal tip cell (DTC) migration during gonad development and in axon repulsion. Plays a role in the migration of the QR neuroblast, a precursor of the AVM neuron, and in the migration of the axon cone of AVM, ALM, CAN and PVM neurons. May act downstream of migratory protein mig-13 to control AVM neuron migration. Probably downstream of integrin ina-1/pat-3, plays a role in the clearance of apoptotic cells during mid-embryogenesis. Phosphorylates ced-1 at 'Tyr-1019' which promotes ced-1 proteasomal degradation, maintaining appropriate ced-1 levels for apoptotic cell clearance. The polypeptide is Tyrosine protein-kinase src-1 (Caenorhabditis elegans).